We begin with the raw amino-acid sequence, 300 residues long: Peroxisomal 2,4-dienoyl-CoA reductase [(3E)-enoyl-CoA-producing] (300 aa).

Residues 42–47 (GGGSGI), 67–71 (RNLEK), and aspartate 93 contribute to the NADP(+) site. Substrate is bound at residue arginine 67. Substrate is bound by residues arginine 95, phenylalanine 125, and 133–135 (SFN). NADP(+) contacts are provided by residues lysine 189 and 215–221 (PGPISGT). Arginine 226 serves as a coordination point for substrate. The Microbody targeting signal signature appears at 298 to 300 (AKL).

It belongs to the short-chain dehydrogenases/reductases (SDR) family. 2,4-dienoyl-CoA reductase subfamily. As to quaternary structure, monomer, dimer and oligomer.

Its subcellular location is the peroxisome. The catalysed reaction is a (2E,4Z)-dienoyl-CoA + NADPH + H(+) = a 4,5-saturated-(3E)-enoyl-CoA + NADP(+). It catalyses the reaction a (2E,4E)-dienoyl-CoA + NADPH + H(+) = a 4,5-saturated-(3E)-enoyl-CoA + NADP(+). The enzyme catalyses (2E,4E)-hexadienoyl-CoA + NADPH + H(+) = (3E)-hexenoyl-CoA + NADP(+). It carries out the reaction (2E,4E)-decadienoyl-CoA + NADPH + H(+) = (3E)-decenoyl-CoA + NADP(+). The catalysed reaction is (2E,4Z,7Z,10Z,13Z,16Z,19Z)-docosaheptaenoyl-CoA + NADPH + H(+) = (3E,7Z,10Z,13Z,16Z,19Z)-docosahexaenoyl-CoA + NADP(+). Auxiliary enzyme of beta-oxidation. Participates in the degradation of unsaturated fatty enoyl-CoA esters having double bonds in both even- and odd-numbered positions in peroxisome. Catalyzes the NADP-dependent reduction of 2,4-dienoyl-CoA to yield trans-3-enoyl-CoA. This is Peroxisomal 2,4-dienoyl-CoA reductase [(3E)-enoyl-CoA-producing] (decr2) from Danio rerio (Zebrafish).